Here is a 96-residue protein sequence, read N- to C-terminus: MAEVEETLKRIQSHKGVIGTMVVNAEGIPIRTTLDNSTTVQYAGLLHHLTMKAKSTVRDIDPQNDLTFLRIRSKKHEIMVAPDKEYLLIVIQNPCE.

A2 is subject to N-acetylalanine.

The protein belongs to the GAMAD family. Homodimer. The cytoplasmic dynein 1 complex consists of two catalytic heavy chains (HCs) and a number of non-catalytic subunits presented by intermediate chains (ICs), light intermediate chains (LICs) and light chains (LCs); the composition seems to vary in respect to the IC, LIC and LC composition. The heavy chain homodimer serves as a scaffold for the probable homodimeric assembly of the respective non-catalytic subunits. The ICs and LICs bind directly to the HC dimer and the LCs assemble on the IC dimer. Interacts with DYNC1I1 and DYNC1I2. Self-associates. Interacts with DYNLRB1. In terms of tissue distribution, high expression in heart, brain, placenta, skeletal muscle, prostate and small intestine; moderate in kidney, pancreas, spleen, testis, ovary and colon; low in lung, liver, thymus and leukocyte.

It is found in the cytoplasm. The protein localises to the cytoskeleton. Acts as one of several non-catalytic accessory components of the cytoplasmic dynein 1 complex that are thought to be involved in linking dynein to cargos and to adapter proteins that regulate dynein function. Cytoplasmic dynein 1 acts as a motor for the intracellular retrograde motility of vesicles and organelles along microtubules. The chain is Dynein light chain roadblock-type 2 (DYNLRB2) from Homo sapiens (Human).